The following is a 108-amino-acid chain: Evasin P1127 (108 aa).

Positions 1-28 are cleaved as a signal peptide; that stretch reads MEAKTFAFLEIAMFIALGIQTFVAVTDA. Disulfide bonds link C41–C63, C45–C65, and C56–C76. N44 is a glycosylation site (N-linked (GlcNAc...) asparagine). The N-linked (GlcNAc...) asparagine glycan is linked to N89.

The protein resides in the secreted. Functionally, salivary chemokine-binding protein which binds to host chemokines CXCL1, CXCL2, CXCL3, CXCL5 and CXCL8. The protein is Evasin P1127 of Ixodes ricinus (Common tick).